The following is a 599-amino-acid chain: Riboflavin biosynthesis protein PYRR, chloroplastic (599 aa).

A chloroplast-targeting transit peptide spans 1–17 (MALSFRISSSSPLICRA). A CMP/dCMP-type deaminase domain is found at 30 to 152 (TTDAAFIRRA…ELRSHGIEVN (123 aa)).

It in the C-terminal section; belongs to the YbiA family.

It is found in the plastid. Its subcellular location is the chloroplast. The enzyme catalyses 5-amino-6-(5-phospho-D-ribitylamino)uracil + NADP(+) = 5-amino-6-(5-phospho-D-ribosylamino)uracil + NADPH + H(+). The catalysed reaction is 2,5-diamino-6-hydroxy-4-(5-phosphoribosylamino)-pyrimidine + H2O = 2,5,6-triamino-4-hydroxypyrimidine + D-ribose 5-phosphate. It catalyses the reaction 5-amino-6-(5-phospho-D-ribosylamino)uracil + H2O = 5,6-diaminouracil + D-ribose 5-phosphate. Its pathway is cofactor biosynthesis; riboflavin biosynthesis; 5-amino-6-(D-ribitylamino)uracil from GTP: step 3/4. In terms of biological role, pyrimidine reductase involved in the riboflavin biosynthesis pathway. Also has a non-functional N-terminal deaminase domain that lacks the catalytically essential zinc-binding residues. Functionally, catalyzes the hydrolysis of the N-glycosidic bond in the first two intermediates of riboflavin biosynthesis, which are highly reactive metabolites, yielding relatively innocuous products. Thus, can divert a surplus of harmful intermediates into relatively harmless products and pre-empt the damage these intermediates would otherwise do. Helps maintain flavin levels. Has no activity against GTP, nucleoside monophosphates or ADP-ribose. The polypeptide is Riboflavin biosynthesis protein PYRR, chloroplastic (PYRR) (Arabidopsis thaliana (Mouse-ear cress)).